We begin with the raw amino-acid sequence, 361 residues long: 5-formaminoimidazole-4-carboxamide-1-(beta)-D-ribofuranosyl 5'-monophosphate synthetase (361 aa).

His27 and Ser94 together coordinate 5-amino-1-(5-phospho-beta-D-ribosyl)imidazole-4-carboxamide. Residues 116 to 348 (RAILRWEAER…MGQRIAKEIK (233 aa)) enclose the ATP-grasp domain. ATP is bound by residues 146–208 (PDDI…ANYC) and Glu230. A 5-amino-1-(5-phospho-beta-D-ribosyl)imidazole-4-carboxamide-binding site is contributed by Asn258. 2 residues coordinate Mg(2+): Gln297 and Glu310.

Belongs to the phosphohexose mutase family. It depends on Mg(2+) as a cofactor. Mn(2+) is required as a cofactor.

It carries out the reaction 5-amino-1-(5-phospho-beta-D-ribosyl)imidazole-4-carboxamide + formate + ATP = 5-formamido-1-(5-phospho-D-ribosyl)imidazole-4-carboxamide + ADP + phosphate. It functions in the pathway purine metabolism; IMP biosynthesis via de novo pathway; 5-formamido-1-(5-phospho-D-ribosyl)imidazole-4-carboxamide from 5-amino-1-(5-phospho-D-ribosyl)imidazole-4-carboxamide (formate route): step 1/1. Functionally, catalyzes the ATP- and formate-dependent formylation of 5-aminoimidazole-4-carboxamide-1-beta-d-ribofuranosyl 5'-monophosphate (AICAR) to 5-formaminoimidazole-4-carboxamide-1-beta-d-ribofuranosyl 5'-monophosphate (FAICAR) in the absence of folates. In Methanococcus maripaludis (strain C6 / ATCC BAA-1332), this protein is 5-formaminoimidazole-4-carboxamide-1-(beta)-D-ribofuranosyl 5'-monophosphate synthetase.